A 391-amino-acid chain; its full sequence is O-methyltransferase ATR12 (391 aa).

S-adenosyl-L-methionine is bound by residues glycine 233 to glycine 234, aspartate 259, and aspartate 279 to phenylalanine 280. The Proton acceptor role is filled by histidine 299.

It belongs to the class I-like SAM-binding methyltransferase superfamily. Cation-independent O-methyltransferase family. COMT subfamily.

The protein operates within mycotoxin biosynthesis. Functionally, O-methyltransferase; part of the core atranone cluster (CAC) which products are predicted to catalyze most or all steps of mycotoxin atranone synthesis, starting from geranylgeranyl pyrophosphate (GGPP). The initial cyclization of GGPP to dolabellane is probably performed by the terpene cyclase ATR13. The Baeyer-Villiger oxidation near the end of the atranone synthesis, which converts atranones D and E to atranones F and G is predicted to be catalyzed by the monooxygenase ATR8. Of the CAC's other predicted gene products, the reducing PKS ATR6 might synthesize a polyketide chain. This polyketide is probably transferred onto the atranone backbone by the polyketide transferase ATR5. Other predicted CAC products include 4 oxygenases (ATR2, ATR3, ATR4, and ATR14), 3 short-chain reductases (ATR7, ATR9, and ATR10), and a methyltransferase (ATR12). These may all be involved in the various steps of atranone biosynthesis, although their specific roles must await experimental determination. This Stachybotrys chlorohalonatus (strain IBT 40285) protein is O-methyltransferase ATR12.